Here is a 275-residue protein sequence, read N- to C-terminus: Formamidopyrimidine-DNA glycosylase (275 aa).

Proline 2 acts as the Schiff-base intermediate with DNA in catalysis. Glutamate 3 (proton donor) is an active-site residue. The Proton donor; for beta-elimination activity role is filled by lysine 58. Residues histidine 91 and arginine 110 each contribute to the DNA site. An FPG-type zinc finger spans residues 238 to 272; that stretch reads QVYGQTGKSCPRCGQAIVKLKVGGRGTHICPKCQK. The active-site Proton donor; for delta-elimination activity is arginine 262.

Belongs to the FPG family. Monomer. The cofactor is Zn(2+).

The catalysed reaction is Hydrolysis of DNA containing ring-opened 7-methylguanine residues, releasing 2,6-diamino-4-hydroxy-5-(N-methyl)formamidopyrimidine.. It carries out the reaction 2'-deoxyribonucleotide-(2'-deoxyribose 5'-phosphate)-2'-deoxyribonucleotide-DNA = a 3'-end 2'-deoxyribonucleotide-(2,3-dehydro-2,3-deoxyribose 5'-phosphate)-DNA + a 5'-end 5'-phospho-2'-deoxyribonucleoside-DNA + H(+). In terms of biological role, involved in base excision repair of DNA damaged by oxidation or by mutagenic agents. Acts as a DNA glycosylase that recognizes and removes damaged bases. Has a preference for oxidized purines, such as 7,8-dihydro-8-oxoguanine (8-oxoG). Has AP (apurinic/apyrimidinic) lyase activity and introduces nicks in the DNA strand. Cleaves the DNA backbone by beta-delta elimination to generate a single-strand break at the site of the removed base with both 3'- and 5'-phosphates. The protein is Formamidopyrimidine-DNA glycosylase of Streptococcus pyogenes serotype M3 (strain ATCC BAA-595 / MGAS315).